We begin with the raw amino-acid sequence, 420 residues long: Glutamyl-tRNA reductase (420 aa).

Residues 49–52 (TCNR), S109, 114–116 (EPQ), and Q120 each bind substrate. The Nucleophile role is filled by C50. 189–194 (GAGETI) is an NADP(+) binding site.

It belongs to the glutamyl-tRNA reductase family. In terms of assembly, homodimer.

It catalyses the reaction (S)-4-amino-5-oxopentanoate + tRNA(Glu) + NADP(+) = L-glutamyl-tRNA(Glu) + NADPH + H(+). It participates in porphyrin-containing compound metabolism; protoporphyrin-IX biosynthesis; 5-aminolevulinate from L-glutamyl-tRNA(Glu): step 1/2. In terms of biological role, catalyzes the NADPH-dependent reduction of glutamyl-tRNA(Glu) to glutamate 1-semialdehyde (GSA). In Sodalis glossinidius (strain morsitans), this protein is Glutamyl-tRNA reductase.